A 288-amino-acid chain; its full sequence is Peroxisomal membrane protein pex13 (288 aa).

Residues methionine 1 to glutamine 32 are disordered. Residues serine 22–glutamine 32 are compositionally biased toward polar residues. Residues isoleucine 178–isoleucine 198 form a helical membrane-spanning segment. The SH3 domain maps to aspartate 222 to arginine 288.

This sequence belongs to the peroxin-13 family. In terms of assembly, interacts (via SH3 domain) with PEX14 (via SH3-binding motif); forming the PEX13-PEX14 docking complex.

It is found in the peroxisome membrane. Functionally, component of the PEX13-PEX14 docking complex, a translocon channel that specifically mediates the import of peroxisomal cargo proteins bound to PEX5 receptor. The PEX13-PEX14 docking complex forms a large import pore which can be opened to a diameter of about 9 nm. Mechanistically, PEX5 receptor along with cargo proteins associates with the PEX14 subunit of the PEX13-PEX14 docking complex in the cytosol, leading to the insertion of the receptor into the organelle membrane with the concomitant translocation of the cargo into the peroxisome matrix. In Schizosaccharomyces pombe (strain 972 / ATCC 24843) (Fission yeast), this protein is Peroxisomal membrane protein pex13 (pex13).